The chain runs to 227 residues: DnaJ homolog subfamily B member 8 (227 aa).

The region spanning 3–69 is the J domain; it reads NYYEVLGVQS…KKRSVYDRAG (67 aa).

Interacts with histone deacetylases HDAC4, HDAC6, and SIRT2, HDAC activity is required for antiaggregation.

Functionally, efficient suppressor of aggregation and toxicity of disease-associated polyglutamine proteins. This is DnaJ homolog subfamily B member 8 (Dnajb8) from Mus musculus (Mouse).